The following is a 271-amino-acid chain: Ribonuclease HII (271 aa).

Positions 84 to 271 (VLIAGVDEVG…HRMSFLSNYI (188 aa)) constitute an RNase H type-2 domain. Positions 90, 91, and 187 each coordinate a divalent metal cation.

Belongs to the RNase HII family. Requires Mn(2+) as cofactor. Mg(2+) serves as cofactor.

Its subcellular location is the cytoplasm. It carries out the reaction Endonucleolytic cleavage to 5'-phosphomonoester.. In terms of biological role, endonuclease that specifically degrades the RNA of RNA-DNA hybrids. The sequence is that of Ribonuclease HII from Clostridium tetani (strain Massachusetts / E88).